A 1774-amino-acid polypeptide reads, in one-letter code: MMVFQSFILGNLVSLCMKIINSVVVVGLYYGFLTTFSIGPSYLFLLRARVMDEGEEGTEKKVSATTGFIAGQLMMFISIYYAPLHLALGRPHTITVLALPYLLFHFFWNNHKHFFDYGSTTRNEMRNLRIQCVFLNNLIFQLFNHFILPSSMLARLVNIYMFRCNNKMLFVTSSFVGWLIGHILFMKWVGLVLVWIQQNHSIRSNVLIRSNKYKFLVSELRNSMARIFSILLFITCVYYLGRIPSPIFTKKLKGTSETEERGGTKQDQEVSTEEAPFPSLFSEEREDLDQIDEIDEIRVNAKEQINKDDEFHIRTYYNYKKVSENLDGNKENSNLEFLKIKKKEDSVLWFEKPFVTLVFDYKRWNRPNRYIKNDQIENAVRNEMSQYFFSACQSDGKDRISFSYPRNISTFFDMIQKKIPSFRREKTPSDKFSTCWSLINEEKKENLKKEFLHRIEALDKEWSVEHILEKTTRFCHNETRKEYLPKIYDPFLQGISRGRIQRLVPFQIITETYIKNNIGRSWINKIHGILLNINYQKFEQTIEKFNRKSSAIEKKLSYFFDPQEEKLNSEEEIKIFKFLFDVVLTDSNDQMLSKNFLDVHEIHKKVPRWSYKLRSDLEELEGENEETIPMEPGIRARKAKRVVIFTDTEPHNEIYTNLKNNQNYDQNDEMVLIRYSQQSDFRREIIQGSMRPQRRKTVIWEFCQANMHSPFFFDKIGKFFFFSFDIRGLTKKILRNFMWKNGKKKLDKKYEDKSKRKEKRRLEIAEVWDSFLFAQILRSSLLVTQSILRKYIILPLLIIIKNSVRMLLFQIPEWSEDLKDWKREMHVKCTYNGVQLSETEFPRKWLTDGIQIKILFPFYLKPWHKSKFHSSQKGRLKKTKDKNDFCFLTVWGMETELPFGSAQKQPSFFEPFFKEFKKKMKKYKTKSLLVLRFFKERDKIFAKEIKNGILKNFIFIKGKRNDLSKGNRIPLFDLREIYELTETKNDSITSNPIIHELSVQNRSMEWKNSSFSENKIKNLIDRINTIRNQIEAISKEKKKITNSSNKTPYESKIIESSKKKWQIVKRINTRLIRKIFYFVKFCLEQLSLGIVVGIMNIPRMTTQFFFESTKKILDKSIYKNEETEDKITKKKNTIYLISTIKKLISNKKKMSYDICSLSQAYVFYKLSQLQVSNFSKLRAVLEYNICGTSLFVTNQIKDFFQKHGIFHYKLKEKTFLNSEINPWKNWLRSHYQYNLPEIVWARLVTEKWKNQINQNSLVLNKSLNKEDSYEKNKFDNYKKLNYLKADSLLNPKQKQNFKKDSIYNIFCYKSINSKEKSFDMPLEIIIDNFLVSSFRGKSNIRDIGEFRTRKYLEWRIIPFWFIKKVNIESAVDTKSQKIYIKTQVQNSEKIDKITKMGLANQKSLFFDWMGMNEEILNYPIANLEFLFFPEFFLFSSTYKIKPWVIPIKLLLFNFNEKKNLNKIITRNKNGFIPSNEKKYLRFYNLTNDEKEKQRNPQLALPNQEKNIEENYAESKIKKRQNKKQYKSNTEVELDLFLTRYSRFQLRWNFFLNKKILNNVKIYCLLVRLKNPNKIAISSIERGEMSLDILMIEKNLTFAKLMKKGILIIEPLRSSVKNDGQLIIYRTIGISLVHKNNHQISQRDKKKIEKSITQLKKKTVNRKKNNYDFFVPEKILSPKRRREFRILICSKLKKKSTRYRNSRFDKNIQNCGQVLNQTKYLDNDKTNLINLKFFLWPNFRLEDLACMNRYWFNTNNGNHFSMIRIHMYTRLKINS.

The next 6 membrane-spanning stretches (helical) occupy residues 19 to 39, 68 to 88, 91 to 111, 133 to 153, 176 to 196, and 227 to 247; these read IINS…FSIG, FIAG…HLAL, PHTI…WNNH, VFLN…SSML, VGWL…LVWI, and IFSI…PSPI. Basic and acidic residues predominate over residues 254 to 268; sequence GTSETEERGGTKQDQ. A disordered region spans residues 254-275; it reads GTSETEERGGTKQDQEVSTEEA.

This sequence belongs to the TIC214 family. As to quaternary structure, part of the Tic complex.

The protein resides in the plastid. Its subcellular location is the chloroplast inner membrane. In terms of biological role, involved in protein precursor import into chloroplasts. May be part of an intermediate translocation complex acting as a protein-conducting channel at the inner envelope. This chain is Protein TIC 214, found in Aethionema cordifolium (Lebanon stonecress).